We begin with the raw amino-acid sequence, 190 residues long: Pyridoxamine 5'-phosphate oxidase C1952.08c homolog (190 aa).

Positions 62 and 69 each coordinate FMN.

The protein belongs to the pyridoxamine 5'-phosphate oxidase family. It depends on FMN as a cofactor.

It is found in the cytoplasm. Its subcellular location is the nucleus. The sequence is that of Pyridoxamine 5'-phosphate oxidase C1952.08c homolog from Schizosaccharomyces pombe (strain 972 / ATCC 24843) (Fission yeast).